The chain runs to 303 residues: N-acetyl-D-glucosamine kinase (303 aa).

ATP contacts are provided by residues G4–K11 and G133–L140. H157, C177, C179, and C184 together coordinate Zn(2+).

Belongs to the ROK (NagC/XylR) family. NagK subfamily.

The catalysed reaction is N-acetyl-D-glucosamine + ATP = N-acetyl-D-glucosamine 6-phosphate + ADP + H(+). It participates in cell wall biogenesis; peptidoglycan recycling. In terms of biological role, catalyzes the phosphorylation of N-acetyl-D-glucosamine (GlcNAc) derived from cell-wall degradation, yielding GlcNAc-6-P. The protein is N-acetyl-D-glucosamine kinase of Salmonella gallinarum (strain 287/91 / NCTC 13346).